Reading from the N-terminus, the 424-residue chain is UPF0597 protein SO_1403 (424 aa).

The protein belongs to the UPF0597 family.

This Shewanella oneidensis (strain ATCC 700550 / JCM 31522 / CIP 106686 / LMG 19005 / NCIMB 14063 / MR-1) protein is UPF0597 protein SO_1403.